A 666-amino-acid polypeptide reads, in one-letter code: Translation factor guf1, mitochondrial (666 aa).

A mitochondrion-targeting transit peptide spans 1-43; the sequence is MRGCLQLARWLRAAPKCPAASLLKPPSGLANPARFFTTSTACW. The tr-type G domain maps to 68–248; the sequence is DRYRNFCIVA…TVVEKIPAPV (181 aa). GTP-binding positions include 77–84, 141–145, and 195–198; these read AHVDHGKS, DTPGH, and NKVD.

This sequence belongs to the TRAFAC class translation factor GTPase superfamily. Classic translation factor GTPase family. LepA subfamily.

Its subcellular location is the mitochondrion inner membrane. It catalyses the reaction GTP + H2O = GDP + phosphate + H(+). Its function is as follows. Promotes mitochondrial protein synthesis. May act as a fidelity factor of the translation reaction, by catalyzing a one-codon backward translocation of tRNAs on improperly translocated ribosomes. Binds to mitochondrial ribosomes in a GTP-dependent manner. In Aspergillus niger (strain ATCC MYA-4892 / CBS 513.88 / FGSC A1513), this protein is Translation factor guf1, mitochondrial (guf1).